The following is a 497-amino-acid chain: ATP synthase subunit alpha, chloroplastic (497 aa).

170–177 is a binding site for ATP; that stretch reads GDRQTGKT.

The protein belongs to the ATPase alpha/beta chains family. F-type ATPases have 2 components, CF(1) - the catalytic core - and CF(0) - the membrane proton channel. CF(1) has five subunits: alpha(3), beta(3), gamma(1), delta(1), epsilon(1). CF(0) has four main subunits: a, b, b' and c.

The protein localises to the plastid. The protein resides in the chloroplast thylakoid membrane. It catalyses the reaction ATP + H2O + 4 H(+)(in) = ADP + phosphate + 5 H(+)(out). Its function is as follows. Produces ATP from ADP in the presence of a proton gradient across the membrane. The alpha chain is a regulatory subunit. In Bigelowiella natans (Pedinomonas minutissima), this protein is ATP synthase subunit alpha, chloroplastic.